The primary structure comprises 439 residues: C4-dicarboxylate transport protein (439 aa).

Transmembrane regions (helical) follow at residues 10–30 (LYVQ…FYPP), 45–65 (LIKM…IAGM), 77–97 (LALL…LVLV), 145–165 (AFAK…GFAL), 185–205 (VLFA…FGAM), 223–243 (LMGT…GTIT), 290–310 (VVGL…AIYL), 332–352 (TLLA…GSGF), and 353–373 (IVLA…LALI). The disordered stretch occupies residues 415–439 (LNGQTAEEASAPQALPDRMESRIHH).

Belongs to the dicarboxylate/amino acid:cation symporter (DAACS) (TC 2.A.23) family.

It localises to the cell inner membrane. Functionally, responsible for the transport of dicarboxylates such as succinate, fumarate, and malate from the periplasm across the membrane. The chain is C4-dicarboxylate transport protein from Verminephrobacter eiseniae (strain EF01-2).